Here is a 36-residue protein sequence, read N- to C-terminus: U14-myrmicitoxin-Tb1a (36 aa).

The signal sequence occupies residues 1–23 (MKIIKLITIFTMMATLMXXVANG). A propeptide spanning residues 24-25 (EP) is cleaved from the precursor. Residue Q35 is modified to Glutamine amide.

Expressed by the venom gland.

It localises to the secreted. In terms of biological role, venom protein with unknown function. Does not induce paralysis when a high dose is administered by intrathoracic injection into the blowfly Lucilia caesar. The chain is U14-myrmicitoxin-Tb1a from Tetramorium bicarinatum (Tramp ant).